Consider the following 337-residue polypeptide: Neurogenic differentiation factor 6 (337 aa).

The tract at residues 28–80 (QKQIKKPESFPKQVVLRGKSIKRAPGEETEKEEEEEDREEEDENGLSRRRGLR) is disordered. Residues 54–71 (EETEKEEEEEDREEEDEN) are compositionally biased toward acidic residues. Positions 80–86 (RKKKTTK) match the Nuclear localization signal motif. Positions 94 to 146 (FRRQEANARERNRMHGLNDALDNLRKVVPCYSKTQKLSKIETLRLAKNYIWAL) constitute a bHLH domain.

In terms of assembly, efficient DNA binding requires dimerization with another bHLH protein. In terms of tissue distribution, specific to the nervous system of both embryos and adults. Highest levels in the cortical plate of the cerebrum.

The protein resides in the nucleus. Activates E box-dependent transcription in collaboration with TCF3/E47. May be a trans-acting factor involved in the development and maintenance of the mammalian nervous system. Transactivates the promoter of its own gene. The sequence is that of Neurogenic differentiation factor 6 (Neurod6) from Mus musculus (Mouse).